A 255-amino-acid chain; its full sequence is Large ribosomal subunit protein uL4 (255 aa).

The protein belongs to the universal ribosomal protein uL4 family. Part of the 50S ribosomal subunit.

Functionally, one of the primary rRNA binding proteins, this protein initially binds near the 5'-end of the 23S rRNA. It is important during the early stages of 50S assembly. It makes multiple contacts with different domains of the 23S rRNA in the assembled 50S subunit and ribosome. Forms part of the polypeptide exit tunnel. The polypeptide is Large ribosomal subunit protein uL4 (Pyrococcus horikoshii (strain ATCC 700860 / DSM 12428 / JCM 9974 / NBRC 100139 / OT-3)).